A 282-amino-acid chain; its full sequence is Elongation factor Ts (282 aa).

Residues 80 to 83 (TDFV) are involved in Mg(2+) ion dislocation from EF-Tu.

It belongs to the EF-Ts family.

The protein localises to the cytoplasm. Functionally, associates with the EF-Tu.GDP complex and induces the exchange of GDP to GTP. It remains bound to the aminoacyl-tRNA.EF-Tu.GTP complex up to the GTP hydrolysis stage on the ribosome. This chain is Elongation factor Ts (tsf), found in Chlamydia muridarum (strain MoPn / Nigg).